The primary structure comprises 239 residues: Probable transcriptional regulatory protein Ajs_1898 (239 aa).

Residues 1–21 (MAGHSKWANIQHRKGRQDEKR) are disordered.

This sequence belongs to the TACO1 family.

The protein localises to the cytoplasm. The protein is Probable transcriptional regulatory protein Ajs_1898 of Acidovorax sp. (strain JS42).